We begin with the raw amino-acid sequence, 569 residues long: Methionine--tRNA ligase (569 aa).

The short motif at 11–21 is the 'HIGH' region element; sequence PYINGVKHLGN. Zn(2+) contacts are provided by Cys-143, Cys-146, Cys-156, and Cys-159. A 'KMSKS' region motif is present at residues 342 to 346; the sequence is KFSTS. Position 345 (Thr-345) interacts with ATP.

It belongs to the class-I aminoacyl-tRNA synthetase family. MetG type 1 subfamily. Monomer. Zn(2+) is required as a cofactor.

The protein resides in the cytoplasm. It catalyses the reaction tRNA(Met) + L-methionine + ATP = L-methionyl-tRNA(Met) + AMP + diphosphate. Is required not only for elongation of protein synthesis but also for the initiation of all mRNA translation through initiator tRNA(fMet) aminoacylation. The sequence is that of Methionine--tRNA ligase from Caulobacter sp. (strain K31).